The sequence spans 304 residues: Probable 5-dehydro-4-deoxyglucarate dehydratase (304 aa).

The protein belongs to the DapA family.

It carries out the reaction 5-dehydro-4-deoxy-D-glucarate + H(+) = 2,5-dioxopentanoate + CO2 + H2O. It participates in carbohydrate acid metabolism; D-glucarate degradation; 2,5-dioxopentanoate from D-glucarate: step 2/2. The protein is Probable 5-dehydro-4-deoxyglucarate dehydratase of Arthrobacter sp. (strain FB24).